Here is a 215-residue protein sequence, read N- to C-terminus: N-(5'-phosphoribosyl)anthranilate isomerase (215 aa).

The protein belongs to the TrpF family.

It carries out the reaction N-(5-phospho-beta-D-ribosyl)anthranilate = 1-(2-carboxyphenylamino)-1-deoxy-D-ribulose 5-phosphate. It participates in amino-acid biosynthesis; L-tryptophan biosynthesis; L-tryptophan from chorismate: step 3/5. The chain is N-(5'-phosphoribosyl)anthranilate isomerase from Pelodictyon phaeoclathratiforme (strain DSM 5477 / BU-1).